Consider the following 567-residue polypeptide: TGF-beta receptor type-2 (567 aa).

Residues 1–22 (MGRGLLRGLWPLHIVLWTRIAS) form the signal peptide. At 23–166 (TIPPHVQKSV…NPDLLLVIFQ (144 aa)) the chain is on the extracellular side. 6 cysteine pairs are disulfide-bonded: cysteine 51–cysteine 84, cysteine 54–cysteine 71, cysteine 61–cysteine 67, cysteine 77–cysteine 101, cysteine 121–cysteine 136, and cysteine 138–cysteine 143. Asparagine 70 and asparagine 94 each carry an N-linked (GlcNAc...) asparagine glycan. Asparagine 154 carries N-linked (GlcNAc...) asparagine glycosylation. The chain crosses the membrane as a helical span at residues 167–187 (VTGISLLPPLGVAISVIIIFY). The Cytoplasmic segment spans residues 188-567 (CYRVNRQQKL…PEDGSLNTTK (380 aa)). A Protein kinase domain is found at 244-544 (IELDTLVGKG…AERFSELEHL (301 aa)). ATP contacts are provided by residues 250–258 (VGKGRFAEV) and lysine 277. The Proton acceptor role is filled by aspartate 379. 3 positions are modified to phosphoserine: serine 409, serine 548, and serine 553. Residues 439 to 567 (VESFKQTDVY…PEDGSLNTTK (129 aa)) are sufficient for interaction with CLU.

It belongs to the protein kinase superfamily. TKL Ser/Thr protein kinase family. TGFB receptor subfamily. Homodimer. Heterohexamer; TGFB1, TGFB2 and TGFB3 homodimeric ligands assemble a functional receptor composed of two TGFBR1 and TGFBR2 heterodimers to form a ligand-receptor heterohexamer. The respective affinity of TGFRB1 and TGFRB2 for the ligands may modulate the kinetics of assembly of the receptor and may explain the different biological activities of TGFB1, TGFB2 and TGFB3. Component of a complex composed of TSC22D1 (via N-terminus), TGFBR1 and TGFBR2; the interaction between TSC22D1 and TGFBR1 is inhibited by SMAD7 and promoted by TGFB1. Interacts with DAXX. Interacts with DYNLT4. Interacts with ZFYVE9; ZFYVE9 recruits SMAD2 and SMAD3 to the TGF-beta receptor. Interacts with and is activated by SCUBE3; this interaction does not affect TGFB1-binding to TGFBR2. Interacts with VPS39; this interaction is independent of the receptor kinase activity and of the presence of TGF-beta. Interacts with CLU. In terms of assembly, homodimer; disulfide-linked. The cofactor is Mg(2+). Requires Mn(2+) as cofactor. Post-translationally, phosphorylated on a Ser/Thr residue in the cytoplasmic domain.

The protein localises to the cell membrane. It localises to the membrane raft. It is found in the secreted. The catalysed reaction is L-threonyl-[receptor-protein] + ATP = O-phospho-L-threonyl-[receptor-protein] + ADP + H(+). It carries out the reaction L-seryl-[receptor-protein] + ATP = O-phospho-L-seryl-[receptor-protein] + ADP + H(+). Its function is as follows. Transmembrane serine/threonine kinase forming with the TGF-beta type I serine/threonine kinase receptor, TGFBR1, the non-promiscuous receptor for the TGF-beta cytokines TGFB1, TGFB2 and TGFB3. Transduces the TGFB1, TGFB2 and TGFB3 signal from the cell surface to the cytoplasm and thus regulates a plethora of physiological and pathological processes including cell cycle arrest in epithelial and hematopoietic cells, control of mesenchymal cell proliferation and differentiation, wound healing, extracellular matrix production, immunosuppression and carcinogenesis. The formation of the receptor complex composed of 2 TGFBR1 and 2 TGFBR2 molecules symmetrically bound to the cytokine dimer results in the phosphorylation and activation of TGFBR1 by the constitutively active TGFBR2. Activated TGFBR1 phosphorylates SMAD2 which dissociates from the receptor and interacts with SMAD4. The SMAD2-SMAD4 complex is subsequently translocated to the nucleus where it modulates the transcription of the TGF-beta-regulated genes. This constitutes the canonical SMAD-dependent TGF-beta signaling cascade. Also involved in non-canonical, SMAD-independent TGF-beta signaling pathways. Has transforming growth factor beta-activated receptor activity. Functionally, binds TGFB1, TGFB2 and TGFB3 in the picomolar affinity range without the participation of additional receptors. Blocks activation of SMAD2 and SMAD3 by TGFB1. This chain is TGF-beta receptor type-2 (TGFBR2), found in Homo sapiens (Human).